The sequence spans 885 residues: Alanine--tRNA ligase (885 aa).

Zn(2+) contacts are provided by histidine 571, histidine 575, cysteine 674, and histidine 678.

Belongs to the class-II aminoacyl-tRNA synthetase family. Requires Zn(2+) as cofactor.

It is found in the cytoplasm. The enzyme catalyses tRNA(Ala) + L-alanine + ATP = L-alanyl-tRNA(Ala) + AMP + diphosphate. In terms of biological role, catalyzes the attachment of alanine to tRNA(Ala) in a two-step reaction: alanine is first activated by ATP to form Ala-AMP and then transferred to the acceptor end of tRNA(Ala). Also edits incorrectly charged Ser-tRNA(Ala) and Gly-tRNA(Ala) via its editing domain. The chain is Alanine--tRNA ligase from Clavibacter sepedonicus (Clavibacter michiganensis subsp. sepedonicus).